The following is a 283-amino-acid chain: Cilia- and flagella-associated protein 77 (283 aa).

The interval 151 to 170 (DQEDRRQKEPPPIPPNMTFG) is disordered.

Belongs to the CFAP77 family. As to quaternary structure, microtubule inner protein component of sperm flagellar doublet microtubules.

Its subcellular location is the cytoplasm. The protein resides in the cytoskeleton. It localises to the cilium axoneme. It is found in the flagellum axoneme. In terms of biological role, microtubule inner protein (MIP) part of the dynein-decorated doublet microtubules (DMTs) in cilia axoneme, which is required for motile cilia beating. This chain is Cilia- and flagella-associated protein 77, found in Mus musculus (Mouse).